We begin with the raw amino-acid sequence, 121 residues long: Large ribosomal subunit protein uL18 (121 aa).

The protein belongs to the universal ribosomal protein uL18 family. In terms of assembly, part of the 50S ribosomal subunit; part of the 5S rRNA/L5/L18/L25 subcomplex. Contacts the 5S and 23S rRNAs.

Functionally, this is one of the proteins that bind and probably mediate the attachment of the 5S RNA into the large ribosomal subunit, where it forms part of the central protuberance. The polypeptide is Large ribosomal subunit protein uL18 (Dehalococcoides mccartyi (strain ATCC BAA-2266 / KCTC 15142 / 195) (Dehalococcoides ethenogenes (strain 195))).